We begin with the raw amino-acid sequence, 73 residues long: MSLELLSKLETKIQAALETIELLKMELEEEKQKASTLSEHNQQLNAQNQQLQEELTSWNEKVTGLVGLLNSEI.

The stretch at L3–V66 forms a coiled coil.

The protein belongs to the ZapB family. In terms of assembly, homodimer. The ends of the coiled-coil dimer bind to each other, forming polymers. Interacts with FtsZ.

The protein localises to the cytoplasm. Non-essential, abundant cell division factor that is required for proper Z-ring formation. It is recruited early to the divisome by direct interaction with FtsZ, stimulating Z-ring assembly and thereby promoting cell division earlier in the cell cycle. Its recruitment to the Z-ring requires functional FtsA or ZipA. This Shewanella baltica (strain OS223) protein is Cell division protein ZapB.